The chain runs to 223 residues: MEDKEKLIVYSNTSSVFTYSAEIRPNFKISVSQSQGFAWNQDLFATQYQQSYKVVYDAHEDNFDELILKIKGKLKTKSNKRAKMKSKTKLTRTAKQRRESPVCERDESDEDNDSDHYQRIQVLDGHEFPRANRYKSVWAHDVHSNEDSTSDGESNHDIDMIGGTGTSYAGAAIMDRPRRKSERSISFVEDSKTGDYRYQTGQVDVVEVDSDTPENNHLKWLIK.

Positions 78–95 (SNKRAKMKSKTKLTRTAK) are enriched in basic residues. The interval 78 to 117 (SNKRAKMKSKTKLTRTAKQRRESPVCERDESDEDNDSDHY) is disordered. The span at 96–105 (QRRESPVCER) shows a compositional bias: basic and acidic residues.

In Saccharomyces cerevisiae (strain ATCC 204508 / S288c) (Baker's yeast), this protein is Protein UGX2 (UGX2).